The primary structure comprises 240 residues: UDP-2,3-diacylglucosamine hydrolase (240 aa).

5 residues coordinate Mn(2+): Asp8, His10, Asp41, Asn79, and His114. 79-80 lines the substrate pocket; the sequence is NR. Positions 122, 160, 164, 167, and 195 each coordinate substrate. Residues His195 and His197 each contribute to the Mn(2+) site.

The protein belongs to the LpxH family. Requires Mn(2+) as cofactor.

It is found in the cell inner membrane. It carries out the reaction UDP-2-N,3-O-bis[(3R)-3-hydroxytetradecanoyl]-alpha-D-glucosamine + H2O = 2-N,3-O-bis[(3R)-3-hydroxytetradecanoyl]-alpha-D-glucosaminyl 1-phosphate + UMP + 2 H(+). Its pathway is glycolipid biosynthesis; lipid IV(A) biosynthesis; lipid IV(A) from (3R)-3-hydroxytetradecanoyl-[acyl-carrier-protein] and UDP-N-acetyl-alpha-D-glucosamine: step 4/6. In terms of biological role, hydrolyzes the pyrophosphate bond of UDP-2,3-diacylglucosamine to yield 2,3-diacylglucosamine 1-phosphate (lipid X) and UMP by catalyzing the attack of water at the alpha-P atom. Involved in the biosynthesis of lipid A, a phosphorylated glycolipid that anchors the lipopolysaccharide to the outer membrane of the cell. In Salmonella paratyphi A (strain ATCC 9150 / SARB42), this protein is UDP-2,3-diacylglucosamine hydrolase.